The chain runs to 249 residues: Isoprenyl transferase (249 aa).

Aspartate 25 is a catalytic residue. A Mg(2+)-binding site is contributed by aspartate 25. Residues 26-29, tryptophan 30, arginine 38, histidine 42, and 70-72 each bind substrate; these read GNGR and STE. The active-site Proton acceptor is the asparagine 73. Residues tryptophan 74, arginine 76, arginine 197, and 203 to 205 each bind substrate; that span reads RLS. Glutamate 216 contacts Mg(2+).

Belongs to the UPP synthase family. Homodimer. The cofactor is Mg(2+).

Its function is as follows. Catalyzes the condensation of isopentenyl diphosphate (IPP) with allylic pyrophosphates generating different type of terpenoids. This chain is Isoprenyl transferase, found in Streptococcus mutans serotype c (strain ATCC 700610 / UA159).